Consider the following 437-residue polypeptide: GTPase Der (437 aa).

EngA-type G domains are found at residues 3–168 and 178–353; these read PLIA…PESE and VKLA…RNRS. GTP is bound by residues 9–16, 56–60, 120–123, 184–191, 231–235, and 296–299; these read GRPNVGKS, DTGGY, NKVE, DTAGL, and NKWD. The 84-residue stretch at 354–437 folds into the KH-like domain; that stretch reads RKISTSSLNR…VPISLRFMEK (84 aa).

It belongs to the TRAFAC class TrmE-Era-EngA-EngB-Septin-like GTPase superfamily. EngA (Der) GTPase family. As to quaternary structure, associates with the 50S ribosomal subunit.

Its function is as follows. GTPase that plays an essential role in the late steps of ribosome biogenesis. The protein is GTPase Der of Chlorobium limicola (strain DSM 245 / NBRC 103803 / 6330).